The sequence spans 272 residues: Ribonuclease 3 (272 aa).

A compositionally biased stretch (polar residues) spans 1 to 20; sequence MTDDVTNVEQPSTASEQQPQ. Residues 1–38 form a disordered region; it reads MTDDVTNVEQPSTASEQQPQDVPAAEPSAAKKRRANKA. The RNase III domain occupies 44 to 171; that stretch reads AAAIEQRLGH…VIGAIYLDGG (128 aa). Glu84 is a Mg(2+) binding site. The active site involves Asp88. Positions 157 and 160 each coordinate Mg(2+). Residue Glu160 is part of the active site. The DRBM domain occupies 196 to 265; that stretch reads DPKTVLQEWA…ASAMLAREGV (70 aa).

Belongs to the ribonuclease III family. As to quaternary structure, homodimer. Mg(2+) serves as cofactor.

The protein localises to the cytoplasm. The catalysed reaction is Endonucleolytic cleavage to 5'-phosphomonoester.. Functionally, digests double-stranded RNA. Involved in the processing of primary rRNA transcript to yield the immediate precursors to the large and small rRNAs (23S and 16S). Processes some mRNAs, and tRNAs when they are encoded in the rRNA operon. Processes pre-crRNA and tracrRNA of type II CRISPR loci if present in the organism. The protein is Ribonuclease 3 of Rhodopseudomonas palustris (strain ATCC BAA-98 / CGA009).